The following is a 469-amino-acid chain: Receptor-type adenylate cyclase (469 aa).

Residues 1-59 (VDTAEKLSKNGCASNYGATQISVWSMARALNASIPPLTNPMTPSMTFRNSNAGRISGVA) lie on the Extracellular side of the membrane. The N-linked (GlcNAc...) asparagine glycan is linked to N31. The helical transmembrane segment at 60–80 (LVGVIIGGALALFLVVALGVV) threads the bilayer. The Cytoplasmic portion of the chain corresponds to 81–469 (PYFFLHNTRD…IDLENDSTTS (389 aa)). In terms of domain architecture, Guanylate cyclase spans 103–257 (TLIFTDIESS…RTSNMAARTE (155 aa)). Mg(2+) is bound by residues D108 and D151.

It belongs to the adenylyl cyclase class-3 family. Mg(2+) serves as cofactor.

The protein resides in the cell membrane. The enzyme catalyses ATP = 3',5'-cyclic AMP + diphosphate. Could act as a receptor for an unknown ligand. The sequence is that of Receptor-type adenylate cyclase (ESAG4C) from Trypanosoma equiperdum.